A 129-amino-acid chain; its full sequence is D-ribose pyranase (129 aa).

The Proton donor role is filled by His-20. Substrate is bound by residues Asp-28, His-96, and Tyr-118 to Asn-120.

This sequence belongs to the RbsD / FucU family. RbsD subfamily. As to quaternary structure, homodecamer.

It is found in the cytoplasm. The catalysed reaction is beta-D-ribopyranose = beta-D-ribofuranose. It participates in carbohydrate metabolism; D-ribose degradation; D-ribose 5-phosphate from beta-D-ribopyranose: step 1/2. Catalyzes the interconversion of beta-pyran and beta-furan forms of D-ribose. This Staphylococcus saprophyticus subsp. saprophyticus (strain ATCC 15305 / DSM 20229 / NCIMB 8711 / NCTC 7292 / S-41) protein is D-ribose pyranase.